Here is a 577-residue protein sequence, read N- to C-terminus: Zinc finger-containing ubiquitin peptidase 1 (577 aa).

The C2H2-type 1 zinc-finger motif lies at Leu2 to His24. The segment at Ile29–His52 adopts a C2H2-type 2; atypical zinc-finger fold. 2 C2H2-type zinc fingers span residues Pro153–His176 and Tyr192–His214. Residues Asp225–Arg247 form an MIU region. Residues Ser231–Lys261 are compositionally biased toward basic and acidic residues. The disordered stretch occupies residues Ser231–Leu262. The segment at Lys248–Gly273 is zUBD/ZHA. An N6-acetyllysine modification is found at Lys261. The active-site Nucleophile is the Cys359. His490 acts as the Proton acceptor in catalysis. Asp511 is an active-site residue.

Belongs to the peptidase C78 family. ZUFSP subfamily. Interacts with RPA1 and RPA2.

Its subcellular location is the cytoplasm. The protein resides in the nucleus. It carries out the reaction Thiol-dependent hydrolysis of ester, thioester, amide, peptide and isopeptide bonds formed by the C-terminal Gly of ubiquitin (a 76-residue protein attached to proteins as an intracellular targeting signal).. In terms of biological role, deubiquitinase with endodeubiquitinase activity that specifically interacts with and cleaves 'Lys-63'-linked long polyubiquitin chains. Shows only weak activity against 'Lys-11' and 'Lys-48'-linked chains. Plays an important role in genome stability pathways, functioning to prevent spontaneous DNA damage and also promote cellular survival in response to exogenous DNA damage. Modulates the ubiquitination status of replication protein A (RPA) complex proteins in response to replication stress. This is Zinc finger-containing ubiquitin peptidase 1 from Rattus norvegicus (Rat).